The primary structure comprises 192 residues: MAP6 domain-containing protein 1 (192 aa).

S-palmitoyl cysteine attachment occurs at residues Cys-5, Cys-10, and Cys-11. Positions 36-106 (LESEEPIPGG…RTKPSATPGR (71 aa)) are disordered. Ser-38 is modified (phosphoserine). The segment covering 43–58 (PGGVPSRRGPSPAGSR) has biased composition (low complexity). Mn regions lie at residues 123–136 (TTSY…WTGV) and 158–170 (DGSP…APEV). Phosphoserine is present on Ser-160.

The protein belongs to the STOP family. Interacts with calmodulin. Palmitoylated. Palmitoylation enhances association with microtubules.

Its subcellular location is the golgi apparatus. The protein localises to the cytoplasm. The protein resides in the cytoskeleton. Functionally, may have microtubule-stabilizing activity. The chain is MAP6 domain-containing protein 1 (MAP6D1) from Bos taurus (Bovine).